We begin with the raw amino-acid sequence, 301 residues long: ATP synthase gamma chain (301 aa).

Belongs to the ATPase gamma chain family. In terms of assembly, F-type ATPases have 2 components, CF(1) - the catalytic core - and CF(0) - the membrane proton channel. CF(1) has five subunits: alpha(3), beta(3), gamma(1), delta(1), epsilon(1). CF(0) has three main subunits: a, b and c.

The protein resides in the cell inner membrane. Produces ATP from ADP in the presence of a proton gradient across the membrane. The gamma chain is believed to be important in regulating ATPase activity and the flow of protons through the CF(0) complex. The sequence is that of ATP synthase gamma chain from Helicobacter pylori (strain HPAG1).